A 1380-amino-acid chain; its full sequence is DNA-directed RNA polymerase subunit beta (1380 aa).

This sequence belongs to the RNA polymerase beta chain family. The RNAP catalytic core consists of 2 alpha, 1 beta, 1 beta' and 1 omega subunit. When a sigma factor is associated with the core the holoenzyme is formed, which can initiate transcription.

The catalysed reaction is RNA(n) + a ribonucleoside 5'-triphosphate = RNA(n+1) + diphosphate. DNA-dependent RNA polymerase catalyzes the transcription of DNA into RNA using the four ribonucleoside triphosphates as substrates. The polypeptide is DNA-directed RNA polymerase subunit beta (Rhizobium rhizogenes (strain K84 / ATCC BAA-868) (Agrobacterium radiobacter)).